A 344-amino-acid polypeptide reads, in one-letter code: Mitochondrial mRNA pseudouridine synthase RPUSD3 (344 aa).

The transit peptide at 1–41 (MGGWRVLGQASGGWRRGLGIRATSTAAGFGTKARHQLQRRG) directs the protein to the mitochondrion. The tract at residues 29–59 (FGTKARHQLQRRGASKPSDPPGDQPFPGLLR) is disordered. Residues 32-42 (KARHQLQRRGA) are compositionally biased toward basic residues. S64 carries the phosphoserine modification.

This sequence belongs to the pseudouridine synthase RluA family. In terms of assembly, forms a regulatory protein-RNA complex, consisting of RCC1L, NGRN, RPUSD3, RPUSD4, TRUB2, FASTKD2 and 16S mt-rRNA.

The protein resides in the mitochondrion matrix. The enzyme catalyses a uridine in mRNA = a pseudouridine in mRNA. Functionally, catalyzes uridine to pseudouridine isomerization (pseudouridylation) of specific mitochondrial mRNAs (mt-mRNAs), a post-transcriptional modification necessary for their translation. Acts at position 390 in COXI mt-mRNA and at position 697-699 in mitochondrial COXIII mt-mRNA. As a component of a functional protein-RNA module, consisting of RCC1L, NGRN, RPUSD3, RPUSD4, TRUB2, FASTKD2 and 16S mitochondrial ribosomal RNA (16S mt-rRNA), controls 16S mt-rRNA abundance and may play a role in mitochondrial ribosome biogenesis. In Bos taurus (Bovine), this protein is Mitochondrial mRNA pseudouridine synthase RPUSD3 (RPUSD3).